The primary structure comprises 154 residues: Lipoprotein signal peptidase (154 aa).

2 consecutive transmembrane segments (helical) span residues 55 to 75 (GHMWFFYLITVVVIGIIIYIM) and 84 to 104 (LFSISLAFILGGAIGNFIDRV). Active-site residues include D111 and D129. A helical membrane pass occupies residues 124-144 (IFNVADASLSVGVVLMLVYVF).

This sequence belongs to the peptidase A8 family.

It localises to the cell membrane. The enzyme catalyses Release of signal peptides from bacterial membrane prolipoproteins. Hydrolyzes -Xaa-Yaa-Zaa-|-(S,diacylglyceryl)Cys-, in which Xaa is hydrophobic (preferably Leu), and Yaa (Ala or Ser) and Zaa (Gly or Ala) have small, neutral side chains.. It participates in protein modification; lipoprotein biosynthesis (signal peptide cleavage). Its function is as follows. This protein specifically catalyzes the removal of signal peptides from prolipoproteins. This Listeria monocytogenes serovar 1/2a (strain ATCC BAA-679 / EGD-e) protein is Lipoprotein signal peptidase.